A 297-amino-acid polypeptide reads, in one-letter code: Bifunctional protein FolD 1 (297 aa).

NADP(+) contacts are provided by residues 174 to 176 (GRS), Ser-199, and Ile-240.

It belongs to the tetrahydrofolate dehydrogenase/cyclohydrolase family. Homodimer.

The catalysed reaction is (6R)-5,10-methylene-5,6,7,8-tetrahydrofolate + NADP(+) = (6R)-5,10-methenyltetrahydrofolate + NADPH. It catalyses the reaction (6R)-5,10-methenyltetrahydrofolate + H2O = (6R)-10-formyltetrahydrofolate + H(+). The protein operates within one-carbon metabolism; tetrahydrofolate interconversion. Its function is as follows. Catalyzes the oxidation of 5,10-methylenetetrahydrofolate to 5,10-methenyltetrahydrofolate and then the hydrolysis of 5,10-methenyltetrahydrofolate to 10-formyltetrahydrofolate. This is Bifunctional protein FolD 1 from Acinetobacter baylyi (strain ATCC 33305 / BD413 / ADP1).